A 229-amino-acid chain; its full sequence is Potassium/proton antiporter CemA (229 aa).

3 consecutive transmembrane segments (helical) span residues 7–27 (FTPL…SFSV), 107–127 (ILHF…SILG), and 189–209 (IISG…KYWI).

It belongs to the CemA family.

The protein resides in the plastid. It is found in the chloroplast inner membrane. It carries out the reaction K(+)(in) + H(+)(out) = K(+)(out) + H(+)(in). In terms of biological role, contributes to K(+)/H(+) antiport activity by supporting proton efflux to control proton extrusion and homeostasis in chloroplasts in a light-dependent manner to modulate photosynthesis. Prevents excessive induction of non-photochemical quenching (NPQ) under continuous-light conditions. Indirectly promotes efficient inorganic carbon uptake into chloroplasts. This chain is Potassium/proton antiporter CemA, found in Atropa belladonna (Belladonna).